The following is a 2851-amino-acid chain: Highly reducing polyketide synthase sthA (2851 aa).

Positions 8-415 (NEPIVIIGSG…GTNAHAIVEG (408 aa)) constitute a Ketosynthase family 3 (KS3) domain. Residues 304–324 (LDPESPNDRPQYIESHGTGTP) are disordered. An acyl transferase (AT) domain region spans residues 529–851 (IFTGQGAQYA…PYHGSLVRGE (323 aa)). An N-terminal hotdog fold region spans residues 926–1059 (HQLLGNVSPD…GELNILLVDD (134 aa)). The PKS/mFAS DH domain occupies 926-1235 (HQLLGNVSPD…FKPVGSDAKD (310 aa)). Positions 949–1242 (PKEMTWLEGH…AKDDRNVFYK (294 aa)) are dehydratase (DH) domain. H958 serves as the catalytic Proton acceptor; for dehydratase activity. The C-terminal hotdog fold stretch occupies residues 1076 to 1235 (MIPVQPSRLY…FKPVGSDAKD (160 aa)). The active-site Proton donor; for dehydratase activity is the D1137. Residues 1390-1577 (QCTLWVAGVL…GIDTMSPPEL (188 aa)) are methyltransferase (MT) domain. The ketoreductase (KR)domain stretch occupies residues 2079 to 2252 (TYWLVGLSGA…RSSVVNVGAI (174 aa)). Positions 2360-2443 (ADITKVVQQA…DLAAESIPAE (84 aa)) constitute a Carrier domain. S2399 is modified (O-(pantetheine 4'-phosphoryl)serine). Residues 2447–2496 (HVQQQQQQAGRQDASSNTSSDDETASTLPTSPESASPGTSTPVPEKDISP) form a disordered region. Polar residues predominate over residues 2455 to 2488 (AGRQDASSNTSSDDETASTLPTSPESASPGTSTP). The segment at 2535–2767 (LTGCSGLLGH…DLVSVDTCCS (233 aa)) is reductase (R) domain.

It depends on pantetheine 4'-phosphate as a cofactor.

It carries out the reaction 7 malonyl-CoA + acetyl-CoA + 10 AH2 + 5 S-adenosyl-L-methionine + 2 H(+) = dehydroprobetaenone I + 10 A + 5 S-adenosyl-L-homocysteine + 7 CO2 + 8 CoA + 6 H2O. Its pathway is mycotoxin biosynthesis. Functionally, highly reducing polyketide synthase; part of the gene cluster that mediates the biosynthesis of the phytotoxin stemphyloxin II. The first step of the pathway is the synthesis of dehydroprobetaenone I by the polyketide synthase sthA and the enoyl reductase sthE via condensation of one acetyl-CoA starter unit with 7 malonyl-CoA units and 5 methylations. The C-terminal reductase (R) domain of sthA catalyzes the reductive release of the polyketide chain. Because sthA lacks a designated enoylreductase (ER) domain, the required activity is provided the enoyl reductase sthE. The short-chain dehydrogenase/reductase sthC then catalyzes reduction of dehydroprobetaenone I to probetaenone I. The cytochrome P450 monooxygenase sthF catalyzes successive epoxidation, oxidation (resulting from epoxide opening) and hydroxylation to install a tertiary alcohol in the decaline ring to yield betaenone C from dehydroprobetaenone I and betaenone B from probetaenone I. The FAD-linked oxidoreductase sthB is responsible for the conversion of betaenone C to betaenone A via an intramolecular aldol reaction between C-1 and C-17 to form the bridged tricyclic system in betaenone A. Finally, the cytochrome P450 monooxygenase sthD catalyzes the hydroxylation of C-15 to afford the final metabolite stemphyloxin II. This chain is Highly reducing polyketide synthase sthA, found in Phaeosphaeria nodorum (strain SN15 / ATCC MYA-4574 / FGSC 10173) (Glume blotch fungus).